The primary structure comprises 401 residues: Pectate lyase (401 aa).

The first 20 residues, 1-20, serve as a signal peptide directing secretion; it reads MATTILPLILFISSLAIASS. Asparagine 38 carries N-linked (GlcNAc...) asparagine glycosylation. Positions 199, 223, and 227 each coordinate Ca(2+). Arginine 279 is a catalytic residue.

This sequence belongs to the polysaccharide lyase 1 family. It depends on Ca(2+) as a cofactor. As to expression, expressed in sites of vascular differentiation and in new primordia on the flank of the shoot meristem.

It catalyses the reaction Eliminative cleavage of (1-&gt;4)-alpha-D-galacturonan to give oligosaccharides with 4-deoxy-alpha-D-galact-4-enuronosyl groups at their non-reducing ends.. The protein operates within glycan metabolism; pectin degradation; 2-dehydro-3-deoxy-D-gluconate from pectin: step 2/5. In terms of biological role, involved in the degradation of pectin. May assist in the removal and modification of an existing pectin matrix in order to allow the deposition of newly synthesized walls polymers for a specialized function or to create an architecture that is extensible. In Zinnia elegans (Garden zinnia), this protein is Pectate lyase.